Here is a 481-residue protein sequence, read N- to C-terminus: 3-isopropylmalate dehydratase large subunit (481 aa).

[4Fe-4S] cluster contacts are provided by Cys-363, Cys-423, and Cys-426. The disordered stretch occupies residues 437-463; sequence GQRAASTSNRNFEGRQGRGGRTHLVSP.

It belongs to the aconitase/IPM isomerase family. LeuC type 1 subfamily. In terms of assembly, heterodimer of LeuC and LeuD. [4Fe-4S] cluster is required as a cofactor.

It carries out the reaction (2R,3S)-3-isopropylmalate = (2S)-2-isopropylmalate. It participates in amino-acid biosynthesis; L-leucine biosynthesis; L-leucine from 3-methyl-2-oxobutanoate: step 2/4. Catalyzes the isomerization between 2-isopropylmalate and 3-isopropylmalate, via the formation of 2-isopropylmaleate. This is 3-isopropylmalate dehydratase large subunit from Salinispora arenicola (strain CNS-205).